A 65-amino-acid polypeptide reads, in one-letter code: uncharacterized protein (65 aa).

The segment at 1–22 (MEKETPQQETKQSTNKESGFFD) is disordered. Residues 7-17 (QQETKQSTNKE) are compositionally biased toward polar residues. Residues 22 to 65 (DEIIKRTNQLLEKEKELHEKYNKEITSQQDQIDQLKKKINQLKY) are a coiled coil.

This is an uncharacterized protein from Dictyostelium discoideum (Social amoeba).